A 412-amino-acid chain; its full sequence is Fringe glycosyltransferase (412 aa).

Over 1 to 15 the chain is Cytoplasmic; that stretch reads MMSLTVLSPPQRFKR. The helical; Signal-anchor for type II membrane protein transmembrane segment at 16–34 threads the bilayer; the sequence is ILQAMMLAVAVVYMTLLLY. The Lumenal segment spans residues 35-412; that stretch reads QSAYGYPGIQ…FPYFSFCPPR (378 aa). R164 is a substrate binding site. 2 disulfide bridges follow: C204–C215 and C233–C297. D237 is a binding site for substrate. A Mn(2+)-binding site is contributed by D238. The active site involves D327. Position 351 (H351) interacts with Mn(2+). The cysteines at positions 400 and 409 are disulfide-linked.

This sequence belongs to the glycosyltransferase 31 family. The cofactor is Mn(2+). In terms of tissue distribution, expressed in dorsal cells.

It is found in the golgi apparatus membrane. The enzyme catalyses 3-O-(alpha-L-fucosyl)-L-threonyl-[EGF-like domain protein] + UDP-N-acetyl-alpha-D-glucosamine = 3-O-(N-acetyl-beta-D-glucosaminyl-(1-&gt;3)-alpha-L-fucosyl)-L-threonyl-[EGF-like domain protein] + UDP + H(+). It catalyses the reaction 3-O-(alpha-L-fucosyl)-L-seryl-[EGF-like domain protein] + UDP-N-acetyl-alpha-D-glucosamine = 3-O-(N-acetyl-beta-D-glucosaminyl-(1-&gt;3)-alpha-L-fucosyl)-L-seryl-[EGF-like domain protein] + UDP + H(+). Its function is as follows. Glycosyltransferase involved in the elongation of O-linked ligands to activate Notch signaling. Possesses fucose-specific beta-1,3-N-acetylglucosaminyltransferase activity; extends the O-linked fucose on the Notch EGF repeats. Boundary-specific cell-signaling molecule that is responsible for dorsal-ventral cell interactions during wing development. In Drosophila melanogaster (Fruit fly), this protein is Fringe glycosyltransferase (fng).